A 586-amino-acid chain; its full sequence is Inner membrane protein YejM (586 aa).

At 1–20 (MVTHRQRYREKVSQMVSWGH) the chain is on the cytoplasmic side. Residues 21 to 43 (WFALFNILLSLVIGSRYLFIADW) form a helical membrane-spanning segment. The Periplasmic segment spans residues 44–57 (PTTLAGRIYSYVSI). Residues 58 to 80 (IGHFSFLVFATYLLILFPLTFIV) traverse the membrane as a helical segment. Over 81–84 (GSQR) the chain is Cytoplasmic. A helical transmembrane segment spans residues 85–103 (LMRFLSVILATAGMTLLLI). The Periplasmic segment spans residues 104 to 134 (DSEVFTRFHLHLNPIVWQLVINPDENEMARD). The helical transmembrane segment at 135–157 (WQLMFISVPVILLLELVFATWSW) threads the bilayer. The Cytoplasmic portion of the chain corresponds to 158–168 (QKLRSLTRRRR). A helical membrane pass occupies residues 169-191 (FARPLAAFLFIAFIASHVVYIWA). Over 192-586 (DANFYRPITM…LTDEKRFIAN (395 aa)) the chain is Periplasmic.

It to H.influenzae HI_0842.

It is found in the cell inner membrane. The polypeptide is Inner membrane protein YejM (yejM) (Escherichia coli O157:H7).